Here is a 569-residue protein sequence, read N- to C-terminus: Glutamate--tRNA ligase (569 aa).

The short motif at Pro107–His117 is the 'HIGH' region element.

Belongs to the class-I aminoacyl-tRNA synthetase family. Glutamate--tRNA ligase type 2 subfamily.

The protein localises to the cytoplasm. The enzyme catalyses tRNA(Glu) + L-glutamate + ATP = L-glutamyl-tRNA(Glu) + AMP + diphosphate. Functionally, catalyzes the attachment of glutamate to tRNA(Glu) in a two-step reaction: glutamate is first activated by ATP to form Glu-AMP and then transferred to the acceptor end of tRNA(Glu). In Nitrosopumilus maritimus (strain SCM1), this protein is Glutamate--tRNA ligase.